A 458-amino-acid chain; its full sequence is MRKFFGTDGIRGIVNEILTPELAYKLSRAIIGYFKDVKKKKVIIGSDTRNSKDMLKSALIAGFTSGGMDILDVGVVSTPSLSYLVKKYDDVLLGIMISASHNPVEYNGIKIFKSDGFKLEDNVEATIEEYILREDDYFRASPREIGVIYNFTQALEDYKNYLKEIIGEDFRGYKIMLDCAFGSLSEIAPTVFKELGAEVIAYNTNYNGININDNCGAVYPEIGRNLFLKSGAHIGFTYDGDGDRVIAFSEDGEIVDGDVLIGIFAKYLKERGLLRGNKIVGTVMTNLGLEEYLKRLGIGLIRAKVGDRYVLEEILKNNLNLGGETSGHIILFDYMPTGDGLLTSLFLLKILKERGIKLSDLAKEIRIFPQVHEKIHIKDIYITEEDEKEFRGIAEEVINGKNIRYIVRKSGTEPVIRITVEGDVPKEDLTNIALEIKNRIIDFLRRSKRQDLPSKGVS.

The active-site Phosphoserine intermediate is Ser100. Mg(2+) contacts are provided by Ser100, Asp239, Asp241, and Asp243. Ser100 carries the phosphoserine modification.

This sequence belongs to the phosphohexose mutase family. The cofactor is Mg(2+). Post-translationally, activated by phosphorylation.

It carries out the reaction alpha-D-glucosamine 1-phosphate = D-glucosamine 6-phosphate. Its function is as follows. Catalyzes the conversion of glucosamine-6-phosphate to glucosamine-1-phosphate. In Dictyoglomus thermophilum (strain ATCC 35947 / DSM 3960 / H-6-12), this protein is Phosphoglucosamine mutase.